We begin with the raw amino-acid sequence, 127 residues long: MSESVGNIRIDPRDTIFAKIISGAIPSKKFYDDEYCIAIEDINPQAPVHLLVIPKLAVGGLSDVANVDLEKYKESMGHIMSKIHHIASLKGADSYRLVINEGVLGQQSVRWLHIHILGGRQMNWPPG.

In terms of domain architecture, HIT spans Ile16 to Gly127.

The protein is Protein pkiA (pkiA) of Dictyostelium discoideum (Social amoeba).